The sequence spans 241 residues: Uridylate kinase (241 aa).

15–18 (KMSG) contacts ATP. G57 serves as a coordination point for UMP. ATP contacts are provided by G58 and R62. UMP is bound by residues D77 and 138–145 (TGNPFFTT). ATP-binding residues include T165, Y171, and D174.

The protein belongs to the UMP kinase family. As to quaternary structure, homohexamer.

It is found in the cytoplasm. The catalysed reaction is UMP + ATP = UDP + ADP. The protein operates within pyrimidine metabolism; CTP biosynthesis via de novo pathway; UDP from UMP (UMPK route): step 1/1. Inhibited by UTP. In terms of biological role, catalyzes the reversible phosphorylation of UMP to UDP. In Dichelobacter nodosus (strain VCS1703A), this protein is Uridylate kinase.